The primary structure comprises 200 residues: Ribonuclease HII (200 aa).

An RNase H type-2 domain is found at glutamine 11–glycine 200. Residues aspartate 17, glutamate 18, and aspartate 109 each coordinate a divalent metal cation.

Belongs to the RNase HII family. The cofactor is Mn(2+). Requires Mg(2+) as cofactor.

It is found in the cytoplasm. The catalysed reaction is Endonucleolytic cleavage to 5'-phosphomonoester.. Functionally, endonuclease that specifically degrades the RNA of RNA-DNA hybrids. The chain is Ribonuclease HII from Hamiltonella defensa subsp. Acyrthosiphon pisum (strain 5AT).